The following is a 714-amino-acid chain: Fatty acid oxidation complex subunit alpha (714 aa).

The enoyl-CoA hydratase stretch occupies residues 1–190 (MEMTSAFTLN…KLGLVDDVVP (190 aa)). The tract at residues 306–714 (APLNSVGILG…FWKTTATDLQ (409 aa)) is 3-hydroxyacyl-CoA dehydrogenase.

It in the N-terminal section; belongs to the enoyl-CoA hydratase/isomerase family. In the central section; belongs to the 3-hydroxyacyl-CoA dehydrogenase family. Heterotetramer of two alpha chains (FadJ) and two beta chains (FadI).

The protein localises to the cytoplasm. It catalyses the reaction a (3S)-3-hydroxyacyl-CoA = a (2E)-enoyl-CoA + H2O. It carries out the reaction a 4-saturated-(3S)-3-hydroxyacyl-CoA = a (3E)-enoyl-CoA + H2O. The enzyme catalyses a (3S)-3-hydroxyacyl-CoA + NAD(+) = a 3-oxoacyl-CoA + NADH + H(+). The catalysed reaction is (3S)-3-hydroxybutanoyl-CoA = (3R)-3-hydroxybutanoyl-CoA. Its pathway is lipid metabolism; fatty acid beta-oxidation. Functionally, catalyzes the formation of a hydroxyacyl-CoA by addition of water on enoyl-CoA. Also exhibits 3-hydroxyacyl-CoA epimerase and 3-hydroxyacyl-CoA dehydrogenase activities. This is Fatty acid oxidation complex subunit alpha from Escherichia coli O8 (strain IAI1).